Here is a 138-residue protein sequence, read N- to C-terminus: Putative esterase HI_1161 (138 aa).

Belongs to the thioesterase PaaI family.

The chain is Putative esterase HI_1161 from Haemophilus influenzae (strain ATCC 51907 / DSM 11121 / KW20 / Rd).